The sequence spans 512 residues: Dihydroniloticin synthase CYP71CD2 (512 aa).

A helical transmembrane segment spans residues 1 to 21; it reads MNLQLDYFSITSFLVFLVVLF. C449 contributes to the heme binding site.

Belongs to the cytochrome P450 family. Heme serves as cofactor.

It is found in the membrane. The catalysed reaction is tirucalla-7,24-dien-3beta-ol + 2 reduced [NADPH--hemoprotein reductase] + 2 O2 = dihydroniloticin + 2 oxidized [NADPH--hemoprotein reductase] + 2 H2O + 2 H(+). Its pathway is secondary metabolite biosynthesis; terpenoid biosynthesis. Functionally, monooxygenase involved in the biosynthesis of limonoids triterpene natural products such as azadirachtin, an antifeedant widely used as bioinsecticide, and possessing many medicinal applications including anti-tumoral, anti-malarial, anti-rheumatic, antibacterial, anti-inflammatory, anti-pyretic and diuretic effects. Catalyzes the conversion of tirucalladienol to dihydroniloticin. The chain is Dihydroniloticin synthase CYP71CD2 from Azadirachta indica (Neem tree).